The following is a 206-amino-acid chain: Cytidylate kinase (206 aa).

Gly-9 to Thr-17 provides a ligand contact to ATP.

Belongs to the cytidylate kinase family. Type 1 subfamily.

It is found in the cytoplasm. It carries out the reaction CMP + ATP = CDP + ADP. The catalysed reaction is dCMP + ATP = dCDP + ADP. This is Cytidylate kinase from Cereibacter sphaeroides (strain ATCC 17023 / DSM 158 / JCM 6121 / CCUG 31486 / LMG 2827 / NBRC 12203 / NCIMB 8253 / ATH 2.4.1.) (Rhodobacter sphaeroides).